We begin with the raw amino-acid sequence, 428 residues long: Serine--tRNA ligase (428 aa).

235–237 (TAE) is a binding site for L-serine. 266 to 268 (RSE) contacts ATP. Position 289 (Glu289) interacts with L-serine. 353 to 356 (EISS) provides a ligand contact to ATP. Ser389 contributes to the L-serine binding site.

Belongs to the class-II aminoacyl-tRNA synthetase family. Type-1 seryl-tRNA synthetase subfamily. In terms of assembly, homodimer. The tRNA molecule binds across the dimer.

The protein localises to the cytoplasm. The enzyme catalyses tRNA(Ser) + L-serine + ATP = L-seryl-tRNA(Ser) + AMP + diphosphate + H(+). It catalyses the reaction tRNA(Sec) + L-serine + ATP = L-seryl-tRNA(Sec) + AMP + diphosphate + H(+). The protein operates within aminoacyl-tRNA biosynthesis; selenocysteinyl-tRNA(Sec) biosynthesis; L-seryl-tRNA(Sec) from L-serine and tRNA(Sec): step 1/1. Catalyzes the attachment of serine to tRNA(Ser). Is also able to aminoacylate tRNA(Sec) with serine, to form the misacylated tRNA L-seryl-tRNA(Sec), which will be further converted into selenocysteinyl-tRNA(Sec). This chain is Serine--tRNA ligase, found in Shewanella baltica (strain OS155 / ATCC BAA-1091).